A 126-amino-acid chain; its full sequence is Large ribosomal subunit protein bL12 (126 aa).

This sequence belongs to the bacterial ribosomal protein bL12 family. In terms of assembly, homodimer. Part of the ribosomal stalk of the 50S ribosomal subunit. Forms a multimeric L10(L12)X complex, where L10 forms an elongated spine to which 2 to 4 L12 dimers bind in a sequential fashion. Binds GTP-bound translation factors.

Forms part of the ribosomal stalk which helps the ribosome interact with GTP-bound translation factors. Is thus essential for accurate translation. In Methylobacterium sp. (strain 4-46), this protein is Large ribosomal subunit protein bL12.